The primary structure comprises 169 residues: MKKSKTYDIVTIAIVAALYVILTMTPGLSAISYGPIQFRVSEMLNFTAFFNKKYIIAVTIGCMISNFLSFTWVDVIVGGLSTLVFLSLGVLLFDRFKEDYFWNGQLNKAFFFFAIFFSISMFTIALELKFVAETPFLLTWGTLALGEFASLFIGAFIMDKLGKRVDLSR.

Transmembrane regions (helical) follow at residues 9–29 (IVTI…PGLS), 44–64 (LNFT…GCMI), 73–93 (VDVI…VLLF), 110–130 (FFFF…ELKF), and 137–157 (LLTW…GAFI).

Belongs to the vitamin uptake transporter (VUT/ECF) (TC 2.A.88) family. In E.coli forms a stable energy-coupling factor (ECF) transporter complex composed of 2 membrane-embedded substrate-binding protein (S component), 2 ATP-binding proteins (A and A' components) and 2 transmembrane proteins (T component), probably with a stoichiometry of 2:1:1:2. May be able to interact with more than 1 S component at a time.

Its subcellular location is the cell membrane. Probably a queuosine precursor-binding protein that interacts with the energy-coupling factor (ECF) ABC-transporter complex. Unlike classic ABC transporters this ECF transporter provides the energy necessary to transport a number of different substrates. The substrates themselves are bound by transmembrane, not extracytoplasmic soluble proteins. This Lactococcus lactis subsp. cremoris (strain MG1363) protein is Queuosine precursor transporter QueT (queT).